The following is a 141-amino-acid chain: Ribonuclease P protein component (141 aa).

Disordered regions lie at residues 37–56 (RTEEESNAAKTGDNPRVGFT) and 114–141 (RRITAKGERRSGGKRRTERPEPGPVNGK). The span at 114–124 (RRITAKGERRS) shows a compositional bias: basic and acidic residues.

This sequence belongs to the RnpA family. As to quaternary structure, consists of a catalytic RNA component (M1 or rnpB) and a protein subunit.

The catalysed reaction is Endonucleolytic cleavage of RNA, removing 5'-extranucleotides from tRNA precursor.. Its function is as follows. RNaseP catalyzes the removal of the 5'-leader sequence from pre-tRNA to produce the mature 5'-terminus. It can also cleave other RNA substrates such as 4.5S RNA. The protein component plays an auxiliary but essential role in vivo by binding to the 5'-leader sequence and broadening the substrate specificity of the ribozyme. The sequence is that of Ribonuclease P protein component from Brucella melitensis biotype 2 (strain ATCC 23457).